We begin with the raw amino-acid sequence, 397 residues long: MKFNKVKLVIHACVLLFIIISIALIFHRLQTKTHSIDPIHKETKLSDNEKYLVDRNKEKVAPSKLKEVYNSKDPKYKKIDKYLQSSLFNGSVAIYENGKLKMSKGYGYQDFEKGIKNTPNTMFLIGSAQKFSTGLLLKQLEEEHKININDPVSKYLPWFKTSKPIPLKDLMLHQSGLYKYKSSKDYKNLDQAVKAIQKRGIDPKKYKKHMYNDGNYLVLAKVIEEVTGKSYAENYYTKIGDPLKLQHTAFYDEQPFKKYLAKGYAYNSTGLSFLRPNILDQYYGAGNLYMTPTDMGKLITQIQQYKLFSPKITNPLLHEFGTKQYPDEYRYGFYAKPTLNRLNGGFFGQVFTVYYNDKYVVVLALNVKGNNEVRIKHIYNDILKQNKPYNTKGVIVQ.

Residues 1-23 (MKFNKVKLVIHACVLLFIIISIA) form the signal peptide.

The protein localises to the cell membrane. The enzyme catalyses [(4-D-Ala)-(2-GlcNAc)-Rib-ol-P]n-[Gro-P]m-beta-D-ManNAc-(1-&gt;4)-alpha-D-GlcNAc-P-peptidoglycan + n H2O = [(2-GlcNAc)-Rib-ol-P]n-[Gro-P]m-beta-D-ManNAc-(1-&gt;4)-alpha-D-GlcNAc-P-peptidoglycan + n D-alanine.. Catalyzes the liberation of D-alanyl moieties present on wall teichoic acid (WTA) and lipoteichoic acid (LTA). Affects the methicillin resistance level and autolysis in the presence of Triton X-100 as well as the cell wall structure. This is Teichoic acid D-alanine hydrolase (fmtA) from Staphylococcus aureus (strain Mu50 / ATCC 700699).